The primary structure comprises 96 residues: Pore-forming peptide amoebapore B (96 aa).

Residues 1–19 (MRAIIFVLIFAIAFAATRE) form the signal peptide. Residues 20–96 (GAILCNLCKD…VVVCEKIHAC (77 aa)) form the Saposin B-type domain. 3 disulfide bridges follow: Cys-24-Cys-96, Cys-27-Cys-90, and Cys-54-Cys-65.

As to quaternary structure, monomer. Homodimer. Hexamer; formed during insertion in the membrane.

It is found in the cytoplasmic granule. Its function is as follows. Forms pores in the cell membrane of host cells. Has antibacterial activity against M.luteus, no activity against E.coli. Implicated in the cytolytic activity of the parasite. The sequence is that of Pore-forming peptide amoebapore B from Entamoeba histolytica (strain ATCC 30459 / HM-1:IMSS / ABRM).